We begin with the raw amino-acid sequence, 222 residues long: Putative serine proteinase inhibitor 2 homolog second part (222 aa).

It belongs to the serpin family. Poxviruses subfamily.

The sequence is that of Putative serine proteinase inhibitor 2 homolog second part from Homo sapiens (Human).